We begin with the raw amino-acid sequence, 335 residues long: tRNA N6-adenosine threonylcarbamoyltransferase (335 aa).

The a divalent metal cation site is built by histidine 109, histidine 113, and tyrosine 130. Substrate is bound by residues 130-134 (YVSGG), aspartate 162, glycine 177, glutamate 181, and asparagine 266. Residue aspartate 294 coordinates a divalent metal cation.

It belongs to the KAE1 / TsaD family. As to quaternary structure, component of the EKC/KEOPS complex composed of at least tp53rk, tprkb, osgep and lage3; the whole complex dimerizes. A divalent metal cation is required as a cofactor.

It localises to the cytoplasm. The protein resides in the nucleus. The enzyme catalyses L-threonylcarbamoyladenylate + adenosine(37) in tRNA = N(6)-L-threonylcarbamoyladenosine(37) in tRNA + AMP + H(+). Its function is as follows. Component of the EKC/KEOPS complex that is required for the formation of a threonylcarbamoyl group on adenosine at position 37 (t(6)A37) in tRNAs that read codons beginning with adenine. The complex is probably involved in the transfer of the threonylcarbamoyl moiety of threonylcarbamoyl-AMP (TC-AMP) to the N6 group of A37. OSGEP likely plays a direct catalytic role in this reaction, but requires other protein(s) of the complex to fulfill this activity. In Danio rerio (Zebrafish), this protein is tRNA N6-adenosine threonylcarbamoyltransferase.